A 90-amino-acid chain; its full sequence is YcgL domain-containing protein YpsIP31758_2009 (90 aa).

Residues 1–85 (MLCAIYRSPK…PPESLLKMHL (85 aa)) enclose the YcgL domain.

This Yersinia pseudotuberculosis serotype O:1b (strain IP 31758) protein is YcgL domain-containing protein YpsIP31758_2009.